The primary structure comprises 305 residues: Acetylglutamate kinase (305 aa).

Residues Gly67–Gly68, Arg89, and Asn190 contribute to the substrate site.

This sequence belongs to the acetylglutamate kinase family. ArgB subfamily.

Its subcellular location is the cytoplasm. It catalyses the reaction N-acetyl-L-glutamate + ATP = N-acetyl-L-glutamyl 5-phosphate + ADP. The protein operates within amino-acid biosynthesis; L-arginine biosynthesis; N(2)-acetyl-L-ornithine from L-glutamate: step 2/4. In terms of biological role, catalyzes the ATP-dependent phosphorylation of N-acetyl-L-glutamate. This Bifidobacterium longum (strain NCC 2705) protein is Acetylglutamate kinase.